The following is an 881-amino-acid chain: Lon protease (881 aa).

Over residues 1-24 (MAKNTDIEHDAHEPAGHGDVRESA) the composition is skewed to basic and acidic residues. The segment at 1 to 77 (MAKNTDIEHD…RAGEAEKGVP (77 aa)) is disordered. Residues 49–59 (QTDTESAQGAA) are compositionally biased toward polar residues. The span at 65–77 (EVQRAGEAEKGVP) shows a compositional bias: basic and acidic residues. Residues 94–287 (VHLIPLTGRP…EVFVYIKKEK (194 aa)) form the Lon N-terminal domain. ATP is bound at residue 440 to 447 (GPPGVGKT). The 183-residue stretch at 679–861 (ANKVGTAVGL…EEVLSLAFPK (183 aa)) folds into the Lon proteolytic domain. Residues S767 and K810 contribute to the active site.

This sequence belongs to the peptidase S16 family. Homohexamer. Organized in a ring with a central cavity.

Its subcellular location is the cytoplasm. It carries out the reaction Hydrolysis of proteins in presence of ATP.. ATP-dependent serine protease that mediates the selective degradation of mutant and abnormal proteins as well as certain short-lived regulatory proteins. Required for cellular homeostasis and for survival from DNA damage and developmental changes induced by stress. Degrades polypeptides processively to yield small peptide fragments that are 5 to 10 amino acids long. Binds to DNA in a double-stranded, site-specific manner. The protein is Lon protease of Treponema pallidum (strain Nichols).